Consider the following 221-residue polypeptide: Large ribosomal subunit protein uL3 (221 aa).

The protein belongs to the universal ribosomal protein uL3 family. Part of the 50S ribosomal subunit. Forms a cluster with proteins L14 and L19.

In terms of biological role, one of the primary rRNA binding proteins, it binds directly near the 3'-end of the 23S rRNA, where it nucleates assembly of the 50S subunit. This is Large ribosomal subunit protein uL3 from Chlamydia trachomatis serovar A (strain ATCC VR-571B / DSM 19440 / HAR-13).